A 5634-amino-acid chain; its full sequence is MIAQEVVHTVFLVALFRSSLAGDGTPQSESRAEEIPEGASTLAFVFDVTGSMYDDLVQVIEGASKILETSLKRPKRPLYNFALVPFHDPEIGPVTITTDPKKFQYELRELYVQGGGDCPEMSIGAIKIALEISLPGSFIYVFTDARSKDYRLTHEVLQLIQQKQSQVVFVLTGDCDDRNHIGYKVYEEIASTSSGQVFHLDKKQVNEVLKWVEEAVQASKVHLLSTDHLEHAVNTWKIPFDPSLKEVTVSLSGPSPVIEIRNPFGKLIKKGFGLNELLNIHNSAKVVNVKEPEAGMWTVKTSSSGRHSVRITGLSTIDFRAGFSRKPTLDFKKTMSRPVQGIPTYVLLNTSGISSPARVDRLELLSISGGSLKTIPVKHYPDRKPYGIWNISDFIPPDEAFFLKVTGYDKDGYLFQRVSSVSFSSIVPDAPKVTMPTRTLGYYLQPGQILCSVESFLPFTLSFMRDGIALGVDQYLRESASVNWDFTKVTLSDEGFYDCIAVSSAGTGRAQTFFDVSEPPPIIQLPNNVTVTPGERAVLACLVISAVDYNLTWQRSGRDIRLADSARIRTLANLSLELRSVKIGDAGEYRCVVSSEGGSAAASVFLTVQEKPKVTVMPKNQSFTGGSEISIMCSATGYPKPKIVWTMNEMFIMGSHRYRMTSEGTLFIKNAVPKDAGTYACLASNAAGTDKQTSTLRYIEAPKLVVEQSELLVALGDTTVMECKTSGIPPPQVKWFKGDLELRPSTFLSIDPLVGLLKIQETQDLDAGDYTCVAINEAGRATGRLTLDVGSPPVFIQEPSDVAVEIGSNVTLPCYVQGYPEPKIKWRRLDNMPVFSRPFSVSFISQLRTGALFISNLWASDKGTYICEAENQFGKIQSQTTVTVTGLVAPLIGISPSMASVIEGQPLTLPCTLLAGNPIPERRWMKNSAMLVQNPYITVRSDGSLHIERVRLQDGGKYTCVASNVAGTNNKTTSVAVHVLPSIQHGQQILSTIEGVPVTLPCRASGIPKPSITWSKKGELISTSSAKFSAGADGSLYVVSPGSEESGEYICTATNAAGYAKRKVQLTVYVRPRVFGDQRGLSQDKPVEISVLAGEEAILPCEAKSLPPPIITWAKDSQLISPFSPRHTFLPSGSMKITETRVSDSGMYLCVATNIAGNVTQSVKLSVHVPPKIQHGNRHIKVQVGQRVDILCNAHGSPPPVITWFKSGRPFLDGAQHPGSPDGTLSIEQAVISDAGVYTCAATNIAGSDEAEVTLHVQEPPSVEDLQPPFNTPFQERLANQRIEFPCPAKGTPKPTIKWLHNGREVTGQEPGVSILEDGALLVIASVTPHNNGEYICVAVNEAGTTERKYNLKVHVPPVIRDKEHVTNVSVLTSQLASLYCEVEGTPSPVITWYKDDIQVTESSTVQIVNNGKILKLFKVSAEDAGRYSCKAINIAGTSQKDFSVNVLVPPSILGASSPSEVSVVLNHNVTLQCPGTGVPFPAIHWFKDGKPLFLGDPNIELSDRGQSLHLRNARRSDKGRYQCTVSNAAGKQAKDIKLTVYVPPSIKGGNITTEISALLNSIVKLECETRGLPVPAITWYKDGQVVTSSSQALYIDKGQLLHIQRAQVSDSATYTCHAANVAGTAEKSFHVDIYVPPTIEGDLTAPSNKQVIIGQSLILECKAAGNPPPILTWLKDGVPVKASDNIHIEAGGKKLEILSALEVDRGQYICVATSVAGEREIKYEVDVLVPPAVEGGEETSYFIVLANNLLELDCQVSGSPPPTIMWLKGGQLIDERDGFKILLNGRKLVIAQAQVSDTGLYQCVATNIAGDHRKEFEVTVHVPPTIKSSDLPEKTVVRYKPVTLQCIANGIPNPSITWLKDDQPVNTAHGNLKIQSSGRVLQIAKALLEDAGRYTCVATNAAGEAHQHTQLHVHEPPSLDDAGKMRNETVVVNNPIQLECKATGKPLPVITWYKDSHPLSGSASAAFLKRGQVLEIGSAQISDAGIYKCVAINSAGATELFYSLQVHVPPSISGSSSMVEVVVNNLARLECEARGIPAPSLTWLKDGSPVSSFSNGIQILSGGRILALTSAQMSDAGRYTCVAVNAAGEKQRDIDLRVYAPPNIMGEEQNVSVLIGQAVELFCQSDAVPPPTLMWLKDGRPLLKRPGLSISENGSVLKIEDAQAGDTGRYTCEATNVAGKTEKNYNVNVWVPPSIYGSDELVQLTAIEGNLITLLCESSGIPPPDLTWKKKGSLVLADSAGRVHILSGGRRLQISIAEKADAGLYTCVASNVAGVAKKEYNLQVYIRPSITNSGGHRPEITVIRGKSISLECEVQGIPQPTVTWMKDGRPLTKGKGVEILDEGRILQLKNVHVSDTGRYVCVAVNVAGMTDKRYDLSVHAPPSIIGNHGVPENVSVVEKSSVSLTCEASGIPLPSITWLKDGWPVNLGSSVKILSGGRMLRLMQTRPEDAGQYTCIVRNAAGEDRKMFGLSVLVPPHIVGENTLEDVKIKEKQSVTLTCEVRGNPVPQITWHKDGQLLQEDEAHHMMSGGRFLQITNAQVSHTGRYTCLASNIAGDKSKSFRLNVFVSPTIAGVDSDGSPEDVIVILNSPTSLVCEAYSYPPATITWFKDGTPLESNRNIRILPGGRTLQILNAQEDNAGRYSCVATNEAGEKIKHYEVKVYIPPIIKKGDLLGPGLSPKEVKIRVNSSLTLECEAYAIPSASLRWYKDGQPLKSDDHVTIAASGHTLQIKEAQISDTGRYTCVASNLAGEDELDFDVNIQVPPSFQKLWEIGNMLDTGRSGEAKDVIINNPLSLHCETNAAPPPTLTWYKDGRPLTSSDRVLILPGGRVLQIPRAKVEDAGRYTCVAVNEAGEDSLRYDVHVLLPPVIKGANSDLPEEVTVLVNKSTQMECSSSGNPAPRNYWQKDGQILLEDEHHKFQSDGRSLQILNAQITDTGRYVCVAENTAGSAKKYFNLNVHVPPSVIGPNHEHLSVVVNHFISLNCEVSGFPPPDLSWLKNEEPIKPNTNVLTVPGGRTLQIIRAKISDGGDYTCIAINQAGESKKKVSLTVHVPPSIKDHGSQSLSIVNVREGTSVSLECESNAVPPPVITWSKNGRMIPDSTNVEILTGGQTLHIRRAEVSDTGQYVCRAINVAGRDDKNFHLNVYVPPTIEGPETEVIVETISNPVTLTCDATGIPPPTITWLKNHKPIENSDPLEVHILSGGSKLQIARPQRSNSGNYTCVASNMEGKAQKNFILFIQVPPSVAGAEVPSEVSVLLGENVELVCNADGIPTPHLQWLRDGKPIVNGETERVRVTTDGSTLNIYRALTSDMGKYTCVATNPAGEEDRIFNLNVYVPPKIRGNKEEAEKLMALVDTSINIECKATGTPPPQINWLKNGLPLPISSHIRLLSAGQVVRIVRAQVSDIAVYTCVASNRAGVDSKHYSLQVFVPPNMDNAMGTEEITIVKGSSTSMTCFTDGTPAPSMSWLRDGQPLAPDAHLTVSTQGMVLQLIKAETEDTGKYTCVATNEAGEVSKHFVLKVLEPPHINGSEGPGEVSVIVNNPLELSCIASGIPAPKISWMKDGRPFLQTEQVQTLEGGAILRVSSAQVEDTGRYTCLASSPAGDDDKEYLVRVHVPPNIAGMDEAQDFTVLRNRQVTLECKSDAVPPPVIMWLKNREQLQATPRVRILSGGRYLQINNADLGDTANYTCVASNIAGKTTREFNLTVNVPPSIGGGPQSLVTLLNKSIALECRAEGVPAPRITWRKDGVVLAESHARYSILENGFLHIESAHVTDTGRYLCMATNVAGTDRRRIDLQVHVPPSIAMGPTNVTVTVNVQTTLACEATGIPKPSVTWRKNGHLLNVDQNQNSYRLLSSGSLVIISPSVDDTASYECTVTSDAGEDKRAVDLTVQVPPTIADEPMDFLVTRQAPAVMTCSASGVPVPSIHWTKNGLRLLPRGDGYRILSSGAIEIPTTQLNHAGRYTCVARNAAGSAHRHVTLRVQEPPVIQPQPSELDVILNNPILLPCEATGIPTPFITWQKEGINVITSGKSLAILPSGSLQISRAVRGDAGTYMCVAQNPAGTALGKVKLNVQVPPVISSHQKEYVVTMDKPVSLLCETEGSPPPDITWHKDGHALTESIRQRILNSGALQIAFAQPDDAGQYTCMAANMAGSSSVSSTLTVHVPPRIQSTEVHFTVNENSQAVLPCVADGIPTPAIHWEKDGVLIANLLGKYTAQPYGELILENVVLEDSGTYTCVANNAAGEDTRIVTLAVHTLPTFTELPGDLSLNKGEQLRLSCKAVGIPLPKLTWTFNNNIIPAHFDSINGHSELVIEKVSKEDSGTYVCTAENSVGFVKAIGFVYVKEPPVFKGDYPSNWIEPLGGNAILNCEVKGDPAPTIQWSRKGADIEISHRIRQLGNGSLAIYGTVNEDAGDYTCVAANEAGMVERSMSLTLQSSPIITLEPVETVVDAGGRVILDCQAAGEPQPTITWSRQGQPISWDNRLSMLPNSSLYIAAARKEDTSEYECVARNLMGSVLVRVPVIVQVHGGFSLWSAWRPCSVTCGKGIQKRSRLCDNPPPANGGRPCQGADSEARHCHNKLCPVDGHWSEWSFWEDCSRSCGHGNQTRTRTCSNPPAQHGGRPCEGHAVETIMCNIRPCPVHGVWNAWQPWSACSKSCGKGSQTRMRLCNNPPPSFGGAHCSGAETQMQVCNERHCPVDGRWATWSSWSACTVSCGGGARKRTRDCSDPVPQYGGNKCEGTGVQSDFCNSDPCPTHGNWSPWSGWGTCSRTCNGGQMRRYRTCDNPRPSNGGRACGGPDTQIQRCNTDMCPVDGSWGTWHSWSHCSVSCGGGERTRKRLCDNPVPTKGGRSCPGDATQVSRCNMQACPGGPQRARGSVIGNINDIEFGIAFLNATITDSPNTDTRVIQAKITNVPRSLGPAMRKIISILNPIYWTTAKEIGEAVNGFTLTNAVFKRETQVEFATGEVLRMTHVARGLDSDGALLLDVIVSGQVLQLHSPAEVGVKDYTEDYIQTGPGQLYAYSTRLFTIDGISIPYTWNHTIFYDQAWGKMPFLVETLHASSIESDYNQLEETLGFKIHASISKGDRSNQCPSGFILDSVGPFCADEDECTAGNPCSHTCHNAIGAYYCSCPKGLTIAADGRTCQDIDECALGGHTCRAGQDCDNTIGSYRCVVHCGTGFRRTSDGLSCQDINECQESSPCHQRCFNVIGSFHCGCEAGYQLKGRKCIDVNECRQNVCRPDQHCKNTRGGYKCIDLCPSGMTKAENGTCIDIDECKDGTHQCRYNQICENTRGSYRCACPRGYRSQGVGRPCIDINECEQVPKPCAHQCSNSPGSFKCICLPGQQLLGDGKSCAGLERLSNYGTQYSSYTLERFSPVRSDYQPSQHYRQYSQLYSSYSEYRNSRASFSRNRRTIRKTCPEGSEANHETCVDIDECQNRDTCQHECKNTIGSYQCVCPPGYRLMLNGKTCQDVDECLEQNVRCGPNRMCFNMRGSYQCIDTPCPPNYQRDPVLGFCLKNCPPNDLECTLSPYALEYKLVSLPFGIAANQDLIRLVAYTQDGVMHPRTTFLMIDEEPAVPFALRDENLKGVVYTTRPLREAETYRMKVGALSYSANGTIEYQTTFIVYIAVSAYPY.

A signal peptide spans 1-21 (MIAQEVVHTVFLVALFRSSLA). Positions 41-216 (TLAFVFDVTG…EVLKWVEEAV (176 aa)) constitute a VWFA domain. 29 Ig-like C2-type domains span residues 431–517 (PKVT…FDVS), 520–607 (PPII…VFLT), 612–697 (PKVT…STLR), 702–788 (PKLV…LTLD), 793–883 (PVFI…TTVT), 890–976 (PLIG…TSVA), 981–1067 (PSIQ…VQLT), 1072–1166 (PRVF…VKLS), 1171–1254 (PKIQ…AEVT), 1261–1353 (PSVE…YNLK), 1357–1446 (PPVI…FSVN), 1451–1540 (PSIL…IKLT), 1545–1633 (PSIK…FHVD), 1638–1723 (PTIE…REIK), 1732–1820 (PAVE…FEVT), 1825–1913 (PTIK…TQLH), 1918–2006 (PSLD…YSLQ), 2011–2096 (PSIS…RDID), 2103–2189 (PNIM…YNVN), 2194–2284 (PSIY…YNLQ), 2289–2378 (PSIT…YDLS), 2383–2472 (PSII…FGLS), 2477–2565 (PHIV…FRLN), 2570–2661 (PTIA…YEVK), 2665–2762 (PPII…VNIQ), 2765–2863 (PSFQ…YDVH), 2867–2958 (PPVI…FNLN), 2962–3050 (PPSV…VSLT), and 3055–3145 (PSIK…FHLN). 2 disulfide bridges follow: cysteine 451-cysteine 499 and cysteine 541-cysteine 591. An O-linked (GalNAc...) threonine glycan is attached at threonine 615. Cystine bridges form between cysteine 633/cysteine 681, cysteine 723/cysteine 772, cysteine 814/cysteine 867, cysteine 911/cysteine 960, cysteine 1002/cysteine 1051, cysteine 1101/cysteine 1150, cysteine 1192/cysteine 1240, cysteine 1287/cysteine 1337, cysteine 1381/cysteine 1430, cysteine 1474/cysteine 1524, and cysteine 1568/cysteine 1617. 2 O-linked (GalNAc...) threonine glycosylation sites follow: threonine 1292 and threonine 1386. Threonine 1639 carries an O-linked (GalNAc...) threonine glycan. 2 disulfides stabilise this stretch: cysteine 1662–cysteine 1711 and cysteine 1755–cysteine 1804. An O-linked (GalNAc...) threonine glycan is attached at threonine 1826. 14 cysteine pairs are disulfide-bonded: cysteine 1847-cysteine 1897, cysteine 1941-cysteine 1990, cysteine 2032-cysteine 2082, cysteine 2124-cysteine 2173, cysteine 2217-cysteine 2268, cysteine 2313-cysteine 2362, cysteine 2407-cysteine 2456, cysteine 2500-cysteine 2549, cysteine 2596-cysteine 2645, cysteine 2695-cysteine 2744, cysteine 2798-cysteine 2847, cysteine 2893-cysteine 2942, cysteine 2985-cysteine 3034, and cysteine 3080-cysteine 3129. O-linked (GalNAc...) threonine glycosylation occurs at threonine 3151. Ig-like C2-type domains follow at residues 3155 to 3227 (PETE…VASN), 3244 to 3334 (PSVA…FNLN), 3339 to 3428 (PKIR…YSLQ), 3433 to 3515 (PNMD…GEVS), 3526 to 3614 (PHIN…YLVR), 3619 to 3707 (PNIA…FNLT), 3712 to 3798 (PSIG…IDLQ), 3803 to 3891 (PSIA…VDLT), 3896 to 3982 (PTIA…VTLR), 3987 to 4073 (PVIQ…VKLN), 4077 to 4163 (PPVI…STLT), 4168 to 4252 (PRIQ…RIVT), 4259 to 4332 (PTFT…AENS), 4347 to 4434 (PPVF…MSLT), and 4439 to 4526 (PIIT…VIVQ). Cystine bridges form between cysteine 3172–cysteine 3223, cysteine 3267–cysteine 3318, cysteine 3363–cysteine 3412, cysteine 3456–cysteine 3505, cysteine 3549–cysteine 3598, cysteine 3642–cysteine 3691, cysteine 3733–cysteine 3782, and cysteine 3824–cysteine 3875. O-linked (GalNAc...) threonine glycosylation is present at threonine 3897. 25 disulfides stabilise this stretch: cysteine 3917/cysteine 3966, cysteine 4008/cysteine 4057, cysteine 4099/cysteine 4147, cysteine 4189/cysteine 4238, cysteine 4280/cysteine 4327, cysteine 4370/cysteine 4418, cysteine 4460/cysteine 4508, cysteine 4540/cysteine 4577, cysteine 4544/cysteine 4582, cysteine 4555/cysteine 4567, cysteine 4597/cysteine 4634, cysteine 4601/cysteine 4639, cysteine 4612/cysteine 4624, cysteine 4654/cysteine 4691, cysteine 4658/cysteine 4696, cysteine 4669/cysteine 4681, cysteine 4711/cysteine 4748, cysteine 4715/cysteine 4753, cysteine 4726/cysteine 4738, cysteine 4768/cysteine 4805, cysteine 4772/cysteine 4810, cysteine 4783/cysteine 4795, cysteine 4825/cysteine 4862, cysteine 4829/cysteine 4867, and cysteine 4840/cysteine 4852. A glycan (O-linked (GalNAc...) threonine) is linked at threonine 4379. 6 TSP type-1 domains span residues 4528 to 4583 (HGGF…KLCP), 4585 to 4640 (DGHW…RPCP), 4642 to 4697 (HGVW…RHCP), 4699 to 4754 (DGRW…DPCP), 4756 to 4811 (HGNW…DMCP), and 4813 to 4868 (DGSW…QACP). Residues 4870–5092 (GPQRARGSVI…SKGDRSNQCP (223 aa)) enclose the Nidogen G2 beta-barrel domain. The region spanning 5106–5145 (DEDECTAGNPCSHTCHNAIGAYYCSCPKGLTIAADGRTCQ) is the EGF-like 1; calcium-binding domain. Disulfide bonds link cysteine 5110–cysteine 5120, cysteine 5116–cysteine 5129, and cysteine 5131–cysteine 5144. An EGF-like 2; calcium-binding domain is found at 5146-5189 (DIDECALGGHTCRAGQDCDNTIGSYRCVVHCGTGFRRTSDGLSC). Residues 5191–5228 (DINECQESSPCHQRCFNVIGSFHCGCEAGYQLKGRKCI) enclose the EGF-like 3; calcium-binding domain. Disulfide bonds link cysteine 5195–cysteine 5205, cysteine 5201–cysteine 5214, and cysteine 5216–cysteine 5227. Residues 5229–5269 (DVNECRQNVCRPDQHCKNTRGGYKCIDLCPSGMTKAENGTC) form the EGF-like 4; calcium-binding domain. An EGF-like 5; calcium-binding domain is found at 5271-5306 (DIDECKDGTHQCRYNQICENTRGSYRCACPRGYRSQ). Disulfide bonds link cysteine 5275–cysteine 5288, cysteine 5282–cysteine 5297, cysteine 5318–cysteine 5329, cysteine 5325–cysteine 5338, cysteine 5340–cysteine 5353, cysteine 5435–cysteine 5445, cysteine 5441–cysteine 5454, and cysteine 5456–cysteine 5469. Residues 5314 to 5354 (DINECEQVPKPCAHQCSNSPGSFKCICLPGQQLLGDGKSCA) enclose the EGF-like 6; calcium-binding domain. The EGF-like 7; calcium-binding domain maps to 5431 to 5470 (DIDECQNRDTCQHECKNTIGSYQCVCPPGYRLMLNGKTCQ).

In terms of tissue distribution, in the kidney, expressed in the glomerulus (at protein level). Expressed in whisker and hair follicles, eye, tongue, and splenic and lymph node conduits (at protein level). In the embryo, localizes to the cleavage furrow at the two-cell stage (at protein level). In neonatal skin, expressed throughout the dermis (at protein level). In adult skin, strongly concentrated at the dermal side of the basement membrane but not detectable in the deeper dermis. Shows tendon-specific localization at the myotendinous junction and is also detected in the perichondrium (at protein level). Expressed by chondrocytes residing in articular cartilage and the femoral growth plate of 52 week old mice (at protein level). Expressed in vascular endothelial cells in coronary arteries and sparsely in endocardial endothelium (at protein level). Expressed in skin, tongue, lung and eye. At 14.5 dpc, expressed in the vibrissae, dermis, forelimb, kidney, intestine, lung and iliac cartilage where expression is found mainly in mesenchymal cells.

It localises to the secreted. It is found in the extracellular space. The protein localises to the extracellular matrix. Its subcellular location is the basement membrane. The protein resides in the cytoplasm. It localises to the cell junction. It is found in the cleavage furrow. In terms of biological role, involved in transforming growth factor beta-mediated rearrangement of the podocyte cytoskeleton which includes reduction of F-actin fibers and broadening, flattening and elongation of podocytes. Plays a role in basement membrane organization. May promote cleavage furrow maturation during cytokinesis in preimplantation embryos. May play a role in the architecture of adhesive and flexible epithelial cell junctions. May play a role during myocardial remodeling by imparting an effect on cardiac fibroblast migration. The polypeptide is Hemicentin-1 (Mus musculus (Mouse)).